A 760-amino-acid polypeptide reads, in one-letter code: Xaa-Pro dipeptidyl-peptidase (760 aa).

Active-site charge relay system residues include Ser349, Asp469, and His499.

This sequence belongs to the peptidase S15 family. In terms of assembly, homodimer.

It localises to the cytoplasm. It catalyses the reaction Hydrolyzes Xaa-Pro-|- bonds to release unblocked, N-terminal dipeptides from substrates including Ala-Pro-|-p-nitroanilide and (sequentially) Tyr-Pro-|-Phe-Pro-|-Gly-Pro-|-Ile.. Functionally, removes N-terminal dipeptides sequentially from polypeptides having unsubstituted N-termini provided that the penultimate residue is proline. The sequence is that of Xaa-Pro dipeptidyl-peptidase from Streptococcus pyogenes serotype M49 (strain NZ131).